The chain runs to 331 residues: Lipoyl synthase (331 aa).

Residues Cys74, Cys79, Cys85, Cys100, Cys104, Cys107, and Ser314 each contribute to the [4Fe-4S] cluster site. The Radical SAM core domain occupies 85 to 303 (CFGKGTATFM…ETEAYKMGFT (219 aa)).

It belongs to the radical SAM superfamily. Lipoyl synthase family. [4Fe-4S] cluster is required as a cofactor.

Its subcellular location is the cytoplasm. The enzyme catalyses [[Fe-S] cluster scaffold protein carrying a second [4Fe-4S](2+) cluster] + N(6)-octanoyl-L-lysyl-[protein] + 2 oxidized [2Fe-2S]-[ferredoxin] + 2 S-adenosyl-L-methionine + 4 H(+) = [[Fe-S] cluster scaffold protein] + N(6)-[(R)-dihydrolipoyl]-L-lysyl-[protein] + 4 Fe(3+) + 2 hydrogen sulfide + 2 5'-deoxyadenosine + 2 L-methionine + 2 reduced [2Fe-2S]-[ferredoxin]. The protein operates within protein modification; protein lipoylation via endogenous pathway; protein N(6)-(lipoyl)lysine from octanoyl-[acyl-carrier-protein]: step 2/2. In terms of biological role, catalyzes the radical-mediated insertion of two sulfur atoms into the C-6 and C-8 positions of the octanoyl moiety bound to the lipoyl domains of lipoate-dependent enzymes, thereby converting the octanoylated domains into lipoylated derivatives. This is Lipoyl synthase from Leptothrix cholodnii (strain ATCC 51168 / LMG 8142 / SP-6) (Leptothrix discophora (strain SP-6)).